Here is a 179-residue protein sequence, read N- to C-terminus: MGVLDIAKGMGVTLGKLFQKPVTVSYPEERVTLQPRFRGRHVLTRHPDTGLEKCIGCSLCAAVCPAYAIYVEAAENDPLNPTSPGERYAKVYEINMLRCIFCGLCEEACPTGAVVLGNEFEMADYRSRDFVYGKEDMLVGVEGSLPQRREAQRTGKPVRLGFKVPKGPRPELEGVEYPR.

2 4Fe-4S ferredoxin-type domains span residues 45-74 (RHPD…VEAA) and 90-119 (KVYE…LGNE). Cys54, Cys57, Cys60, Cys64, Cys99, Cys102, Cys105, and Cys109 together coordinate [4Fe-4S] cluster. Residues 146 to 179 (PQRREAQRTGKPVRLGFKVPKGPRPELEGVEYPR) form a disordered region. Residues 168 to 179 (PRPELEGVEYPR) are compositionally biased toward basic and acidic residues.

This sequence belongs to the complex I 23 kDa subunit family. As to quaternary structure, NDH-1 is composed of 15 different subunits. Subunits NuoA, H, J, K, L, M, N constitute the membrane sector of the complex. Requires [4Fe-4S] cluster as cofactor.

The protein localises to the cell membrane. It catalyses the reaction a quinone + NADH + 5 H(+)(in) = a quinol + NAD(+) + 4 H(+)(out). In terms of biological role, NDH-1 shuttles electrons from NADH, via FMN and iron-sulfur (Fe-S) centers, to quinones in the respiratory chain. The immediate electron acceptor for the enzyme in this species is believed to be ubiquinone. Couples the redox reaction to proton translocation (for every two electrons transferred, four hydrogen ions are translocated across the cytoplasmic membrane), and thus conserves the redox energy in a proton gradient. The sequence is that of NADH-quinone oxidoreductase subunit I from Deinococcus geothermalis (strain DSM 11300 / CIP 105573 / AG-3a).